The primary structure comprises 166 residues: CDP-archaeol synthase (166 aa).

Transmembrane regions (helical) follow at residues 42-62, 73-93, 103-123, and 128-148; these read LVLGILSGVLLGLIQVSVQDA, VLSVLLLAVGALAGDMVKSFV, AAWPLADQYDLVAGSLLLLLI, and FAAVNLTIPVIFWILVLTPLL.

The protein belongs to the CDP-archaeol synthase family. Requires Mg(2+) as cofactor.

The protein resides in the cell membrane. The enzyme catalyses 2,3-bis-O-(geranylgeranyl)-sn-glycerol 1-phosphate + CTP + H(+) = CDP-2,3-bis-O-(geranylgeranyl)-sn-glycerol + diphosphate. The protein operates within membrane lipid metabolism; glycerophospholipid metabolism. In terms of biological role, catalyzes the formation of CDP-2,3-bis-(O-geranylgeranyl)-sn-glycerol (CDP-archaeol) from 2,3-bis-(O-geranylgeranyl)-sn-glycerol 1-phosphate (DGGGP) and CTP. This reaction is the third ether-bond-formation step in the biosynthesis of archaeal membrane lipids. The sequence is that of CDP-archaeol synthase from Methanosphaerula palustris (strain ATCC BAA-1556 / DSM 19958 / E1-9c).